The following is a 149-amino-acid chain: MKVVLTKDVEGWGTIGDVIEVKKGFARNYLIPRGLALELTEENKRFIDNILAQKARKLQREKEKAFELAKKLNGVEIEIERPIGVTGKMYGSVTTSDITEKLKEKELEVDKKKIMLRSPIRNLGSYNIQVKLHPEVSATIKVHVVPESK.

It belongs to the bacterial ribosomal protein bL9 family.

Binds to the 23S rRNA. In Sulfurihydrogenibium sp. (strain YO3AOP1), this protein is Large ribosomal subunit protein bL9.